The sequence spans 494 residues: Fumigaclavine B O-acetyltransferase easN (494 aa).

Belongs to the fumigaclavine B O-acetyltransferase family. Monomer.

It carries out the reaction fumigaclavine B + acetyl-CoA = fumigaclavine A + CoA. It functions in the pathway alkaloid biosynthesis; ergot alkaloid biosynthesis. Functionally, fumigaclavine B O-acetyltransferase; part of the gene cluster that mediates the biosynthesis of fumiclavanine C, a fungal ergot alkaloid. DmaW catalyzes the first step of ergot alkaloid biosynthesis by condensing dimethylallyl diphosphate (DMAP) and tryptophan to form 4-dimethylallyl-L-tryptophan. The second step is catalyzed by the methyltransferase easF that methylates 4-dimethylallyl-L-tryptophan in the presence of S-adenosyl-L-methionine, resulting in the formation of 4-dimethylallyl-L-abrine. The catalase easC and the FAD-dependent oxidoreductase easE then transform 4-dimethylallyl-L-abrine to chanoclavine-I which is further oxidized by EasD in the presence of NAD(+), resulting in the formation of chanoclavine-I aldehyde. EasA reduces chanoclavine-I aldehyde to dihydrochanoclavine-I aldehyde that spontaneously dehydrates to form 6,8-dimethyl-6,7-didehydroergoline. EasG then catalyzes the reduction of 6,8-dimethyl-6,7-didehydroergoline to form festuclavine. Hydrolysis of festuclavine by easM then leads to the formation of fumigaclavine B which is in turn acetylated by easN to fumigaclavine A. Finally, easL catalyzes the conversion of fumigaclavine A into fumigaclavine C by attaching a dimethylallyl moiety to C-2 of the indole nucleus. In Aspergillus fumigatus (strain ATCC MYA-4609 / CBS 101355 / FGSC A1100 / Af293) (Neosartorya fumigata), this protein is Fumigaclavine B O-acetyltransferase easN.